An 85-amino-acid polypeptide reads, in one-letter code: Protein MANBAL (85 aa).

Residues 24-44 (YGLFLGAIFQLICVLAIIVPI) form a helical membrane-spanning segment. Over residues 49 to 64 (EAEAEQAEPRSAEGPK) the composition is skewed to basic and acidic residues. The segment at 49 to 85 (EAEAEQAEPRSAEGPKKPKAAIASTNKRPKKETKKKR) is disordered. Residues 75 to 85 (KRPKKETKKKR) are compositionally biased toward basic residues.

Belongs to the UPF0239 family.

Its subcellular location is the membrane. The sequence is that of Protein MANBAL (Manbal) from Mus musculus (Mouse).